The primary structure comprises 150 residues: Large ribosomal subunit protein uL11 (150 aa).

This sequence belongs to the universal ribosomal protein uL11 family. In terms of assembly, part of the ribosomal stalk of the 50S ribosomal subunit. Interacts with L10 and the large rRNA to form the base of the stalk. L10 forms an elongated spine to which L12 dimers bind in a sequential fashion forming a multimeric L10(L12)X complex. In terms of processing, one or more lysine residues are methylated.

In terms of biological role, forms part of the ribosomal stalk which helps the ribosome interact with GTP-bound translation factors. The sequence is that of Large ribosomal subunit protein uL11 from Cereibacter sphaeroides (strain ATCC 17025 / ATH 2.4.3) (Rhodobacter sphaeroides).